Here is a 68-residue protein sequence, read N- to C-terminus: ATP synthase F(0) complex subunit 8 (68 aa).

The helical transmembrane segment at 8–21 (VWPTMITPMLLTLF) threads the bilayer. An N6-acetyllysine; alternate modification is found at lysine 54. Lysine 54 is modified (N6-succinyllysine; alternate). Lysine 57 is subject to N6-acetyllysine.

Belongs to the ATPase protein 8 family. In terms of assembly, component of the ATP synthase complex composed at least of ATP5F1A/subunit alpha, ATP5F1B/subunit beta, ATP5MC1/subunit c (homooctomer), MT-ATP6/subunit a, MT-ATP8/subunit 8, ATP5ME/subunit e, ATP5MF/subunit f, ATP5MG/subunit g, ATP5MK/subunit k, ATP5MJ/subunit j, ATP5F1C/subunit gamma, ATP5F1D/subunit delta, ATP5F1E/subunit epsilon, ATP5PF/subunit F6, ATP5PB/subunit b, ATP5PD/subunit d, ATP5PO/subunit OSCP. ATP synthase complex consists of a soluble F(1) head domain (subunits alpha(3) and beta(3)) - the catalytic core - and a membrane F(0) domain - the membrane proton channel (subunits c, a, 8, e, f, g, k and j). These two domains are linked by a central stalk (subunits gamma, delta, and epsilon) rotating inside the F1 region and a stationary peripheral stalk (subunits F6, b, d, and OSCP). Interacts with PRICKLE3.

It localises to the mitochondrion membrane. Functionally, subunit 8, of the mitochondrial membrane ATP synthase complex (F(1)F(0) ATP synthase or Complex V) that produces ATP from ADP in the presence of a proton gradient across the membrane which is generated by electron transport complexes of the respiratory chain. ATP synthase complex consist of a soluble F(1) head domain - the catalytic core - and a membrane F(1) domain - the membrane proton channel. These two domains are linked by a central stalk rotating inside the F(1) region and a stationary peripheral stalk. During catalysis, ATP synthesis in the catalytic domain of F(1) is coupled via a rotary mechanism of the central stalk subunits to proton translocation. In vivo, can only synthesize ATP although its ATP hydrolase activity can be activated artificially in vitro. Part of the complex F(0) domain. This Homo sapiens (Human) protein is ATP synthase F(0) complex subunit 8.